The following is a 269-amino-acid chain: Shikimate dehydrogenase (NADP(+)) (269 aa).

Residues 14–16 and threonine 60 each bind shikimate; that span reads TLS. Catalysis depends on lysine 64, which acts as the Proton acceptor. Residue aspartate 76 participates in NADP(+) binding. Asparagine 85 and aspartate 100 together coordinate shikimate. NADP(+) contacts are provided by residues 122–126 and methionine 208; that span reads GAGGA. Tyrosine 210 contacts shikimate. Glycine 232 serves as a coordination point for NADP(+).

The protein belongs to the shikimate dehydrogenase family. Homodimer.

The enzyme catalyses shikimate + NADP(+) = 3-dehydroshikimate + NADPH + H(+). It participates in metabolic intermediate biosynthesis; chorismate biosynthesis; chorismate from D-erythrose 4-phosphate and phosphoenolpyruvate: step 4/7. In terms of biological role, involved in the biosynthesis of the chorismate, which leads to the biosynthesis of aromatic amino acids. Catalyzes the reversible NADPH linked reduction of 3-dehydroshikimate (DHSA) to yield shikimate (SA). The chain is Shikimate dehydrogenase (NADP(+)) from Caldivirga maquilingensis (strain ATCC 700844 / DSM 13496 / JCM 10307 / IC-167).